The primary structure comprises 215 residues: Pyrrolidone-carboxylate peptidase (215 aa).

Catalysis depends on residues Glu81, Cys144, and His168.

Belongs to the peptidase C15 family. As to quaternary structure, homotetramer.

The protein localises to the cytoplasm. The enzyme catalyses Release of an N-terminal pyroglutamyl group from a polypeptide, the second amino acid generally not being Pro.. In terms of biological role, removes 5-oxoproline from various penultimate amino acid residues except L-proline. This is Pyrrolidone-carboxylate peptidase from Bacillus velezensis (strain DSM 23117 / BGSC 10A6 / LMG 26770 / FZB42) (Bacillus amyloliquefaciens subsp. plantarum).